Reading from the N-terminus, the 720-residue chain is Methionine--tRNA ligase (720 aa).

Residues 27 to 37 (PYANGQIHIGH) carry the 'HIGH' region motif. Positions 158, 161, 171, and 174 each coordinate Zn(2+). A 'KMSKS' region motif is present at residues 348-352 (KMSKS). Lysine 351 lines the ATP pocket. The tRNA-binding domain occupies 614-720 (DFAKVDLRIA…SGAKPGMRVK (107 aa)).

Belongs to the class-I aminoacyl-tRNA synthetase family. MetG type 1 subfamily. As to quaternary structure, homodimer. Zn(2+) serves as cofactor.

It is found in the cytoplasm. It carries out the reaction tRNA(Met) + L-methionine + ATP = L-methionyl-tRNA(Met) + AMP + diphosphate. In terms of biological role, is required not only for elongation of protein synthesis but also for the initiation of all mRNA translation through initiator tRNA(fMet) aminoacylation. This is Methionine--tRNA ligase from Burkholderia ambifaria (strain ATCC BAA-244 / DSM 16087 / CCUG 44356 / LMG 19182 / AMMD) (Burkholderia cepacia (strain AMMD)).